We begin with the raw amino-acid sequence, 350 residues long: Glycerol-1-phosphate dehydrogenase [NAD(P)+] (350 aa).

Residues 97–101 and 119–122 each bind NAD(+); these read GSIID and TTAS. Substrate is bound at residue aspartate 124. Residue serine 128 coordinates NAD(+). Aspartate 171 provides a ligand contact to substrate. Residues aspartate 171 and histidine 251 each contribute to the Zn(2+) site. Residue histidine 255 coordinates substrate. Histidine 267 contributes to the Zn(2+) binding site.

The protein belongs to the glycerol-1-phosphate dehydrogenase family. The cofactor is Zn(2+).

Its subcellular location is the cytoplasm. It carries out the reaction sn-glycerol 1-phosphate + NAD(+) = dihydroxyacetone phosphate + NADH + H(+). It catalyses the reaction sn-glycerol 1-phosphate + NADP(+) = dihydroxyacetone phosphate + NADPH + H(+). Its pathway is membrane lipid metabolism; glycerophospholipid metabolism. Its function is as follows. Catalyzes the NAD(P)H-dependent reduction of dihydroxyacetonephosphate (DHAP or glycerone phosphate) to glycerol 1-phosphate (G1P). The G1P thus generated is used as the glycerophosphate backbone of phospholipids in the cellular membranes of Archaea. The polypeptide is Glycerol-1-phosphate dehydrogenase [NAD(P)+] (Thermococcus sibiricus (strain DSM 12597 / MM 739)).